Consider the following 922-residue polypeptide: Pertactin autotransporter (922 aa).

A signal peptide spans 1–34 (MNMSLSRIVKAAPLRRTTLAMALGALGAAPAAYA). The Cell attachment site; involved in adhesion to various eukaryotic cell lines signature appears at 260–262 (RGD). 3 tandem repeats follow at residues 266 to 270 (GGAVP), 271 to 275 (GGAVP), and 276 to 280 (GGAVP). Positions 266-290 (GGAVPGGAVPGGAVPGGFGPLLDGW) are 4 X 5 AA tandem repeats of G-G-A-V-P. Residues 281–285 (GGFGP) form a 4; approximate repeat. A disordered region spans residues 561–619 (SLVGAKAPPAPKPAPQPGPQPGPQPPQPPQPPQPPQPPQPPQRQPEAPAPQPPAGRELS). The segment covering 568–613 (PPAPKPAPQPGPQPGPQPPQPPQPPQPPQPPQPPQRQPEAPAPQPP) has biased composition (pro residues). Residues 575–603 (PQPGPQPGPQPPQPPQPPQPPQPPQPPQR) are 9 X 3 AA approximate repeats of P-Q-P. The 269-residue stretch at 654–922 (LNPDAGGAWG…TFHAGYRYSW (269 aa)) folds into the Autotransporter domain.

In terms of assembly, monomer.

It is found in the periplasm. The protein localises to the secreted. The protein resides in the cell surface. It localises to the cell outer membrane. In terms of biological role, agglutinogen that binds to eukaryotic cells; a process mediated by the R-G-D sequence. Pertactin may have a role in bacterial adhesion, and thus play a role in virulence. May contribute to the disease state of whooping cough. The protein is Pertactin autotransporter (prn) of Bordetella parapertussis (strain 12822 / ATCC BAA-587 / NCTC 13253).